A 222-amino-acid polypeptide reads, in one-letter code: Glutathione-specific gamma-glutamylcyclotransferase 1 (222 aa).

Low complexity predominate over residues 1-22; that stretch reads MKQESAAPNTPPTSQSPTPSAQ. The segment at 1–24 is disordered; sequence MKQESAAPNTPPTSQSPTPSAQFP. 35-40 lines the substrate pocket; it reads IFGYGS. Residue glutamate 115 is the Proton acceptor of the active site.

Belongs to the gamma-glutamylcyclotransferase family. ChaC subfamily. Interacts with NOTCH1 (via extracellular region).

The protein resides in the cytoplasm. It is found in the cytosol. The protein localises to the golgi apparatus. It localises to the trans-Golgi network. It catalyses the reaction glutathione = L-cysteinylglycine + 5-oxo-L-proline. Functionally, catalyzes the cleavage of glutathione into 5-oxo-L-proline and a Cys-Gly dipeptide. Acts specifically on glutathione, but not on other gamma-glutamyl peptides. Glutathione depletion is an important factor for apoptosis initiation and execution. Acts as a pro-apoptotic component of the unfolded protein response pathway by mediating the pro-apoptotic effects of the ATF4-ATF3-DDIT3/CHOP cascade. Negative regulator of Notch signaling pathway involved in embryonic neurogenesis: acts by inhibiting Notch cleavage by furin, maintaining Notch in an immature inactive form, thereby promoting neurogenesis in embryos. The polypeptide is Glutathione-specific gamma-glutamylcyclotransferase 1 (Homo sapiens (Human)).